Here is a 443-residue protein sequence, read N- to C-terminus: ATP-dependent protease ATPase subunit HslU (443 aa).

Residues isoleucine 18 and 60–65 (GVGKTE) each bind ATP. A disordered region spans residues 138 to 158 (PAENQWGEKEQNEDKGTRQTF). Residues 143–154 (WGEKEQNEDKGT) show a composition bias toward basic and acidic residues. Positions 255, 321, and 393 each coordinate ATP.

This sequence belongs to the ClpX chaperone family. HslU subfamily. A double ring-shaped homohexamer of HslV is capped on each side by a ring-shaped HslU homohexamer. The assembly of the HslU/HslV complex is dependent on binding of ATP.

The protein localises to the cytoplasm. In terms of biological role, ATPase subunit of a proteasome-like degradation complex; this subunit has chaperone activity. The binding of ATP and its subsequent hydrolysis by HslU are essential for unfolding of protein substrates subsequently hydrolyzed by HslV. HslU recognizes the N-terminal part of its protein substrates and unfolds these before they are guided to HslV for hydrolysis. In Pseudoalteromonas atlantica (strain T6c / ATCC BAA-1087), this protein is ATP-dependent protease ATPase subunit HslU.